A 152-amino-acid polypeptide reads, in one-letter code: Small ribosomal subunit protein uS15 (152 aa).

This sequence belongs to the universal ribosomal protein uS15 family. Part of the 30S ribosomal subunit.

The protein is Small ribosomal subunit protein uS15 of Methanocorpusculum labreanum (strain ATCC 43576 / DSM 4855 / Z).